The following is a 493-amino-acid chain: MKFLAVLLAAGMLAFLGAVICIIASVPLAASPARALPGGTDNASAASAAGGSGPQRSLSALHSAGGSAGPSVLPGEPAASVFPPPPVPLLSRFLCTPLAAACPSGAEQGDAAGERAELLLLQSTAEQLRQTALQQEARIRADRDTIRELTGKLGRCESGLPRGLQDAGPRRDTMADGAWDSPALLLELEDAVRALRDRIERIEQELPARGNLSSAPAPAMPTALHSKMDELECQLLAKVLALEKERAALSHGSHQQRQEVEKELNALQGRVAELEHGSSAYSPPDAFKVSIPIRNNYMYARVRKALPELYAFTACMCVRSRSGGSGQGTPFSYSVPGQANEIVLLEAGLEPMELLINDKVAQLPLSLKDSNWHHICISWTTRDGLWSAYQDGELRGSGENLAAWHPIKPHGILILGQEQDTLGGRFDATQAFVGDIAQFNLWDHALTPAQVLGMANCTGPLMGNVLPWEDKLVEAFGGAKKAAFDVCKGRAKA.

Over 1–2 (MK) the chain is Cytoplasmic. Residues 3–23 (FLAVLLAAGMLAFLGAVICII) form a helical; Signal-anchor for type II membrane protein membrane-spanning segment. The Extracellular portion of the chain corresponds to 24–493 (ASVPLAASPA…FDVCKGRAKA (470 aa)). The interval 37–72 (PGGTDNASAASAAGGSGPQRSLSALHSAGGSAGPSV) is disordered. N-linked (GlcNAc...) asparagine glycosylation is present at Asn-42. Low complexity predominate over residues 57–72 (SLSALHSAGGSAGPSV). An N-linked (GlcNAc...) asparagine glycan is attached at Asn-211. The region spanning 285 to 487 (DAFKVSIPIR…GAKKAAFDVC (203 aa)) is the Pentraxin (PTX) domain. Cysteines 315 and 376 form a disulfide. 5 residues coordinate Ca(2+): Asn-340, Glu-418, Gln-419, Asp-420, and Gln-430. An N-linked (GlcNAc...) asparagine glycan is attached at Asn-456.

In terms of assembly, heteropentamer with NPTX1 and/or NPTX2. Also binds taipoxin-associated calcium-binding protein 49 (TCBP49/RCN2). Interacts with KLHL2. It depends on Ca(2+) as a cofactor. Post-translationally, ubiquitinated by a cullin-RING-based BCR (BTB-CUL3-RBX1) E3 ubiquitin-protein ligase complex containing KLHL2.

Its subcellular location is the membrane. Functionally, may be involved in mediating uptake of synaptic material during synapse remodeling or in mediating the synaptic clustering of AMPA glutamate receptors at a subset of excitatory synapses. The sequence is that of Neuronal pentraxin receptor (Nptxr) from Mus musculus (Mouse).